A 260-amino-acid chain; its full sequence is Proteasome subunit alpha (260 aa).

Residues 237–248 show a composition bias toward low complexity; that stretch reads ASTDAPAAAADS. Positions 237–260 are disordered; the sequence is ASTDAPAAAADSADVEERPDSEAP. A compositionally biased stretch (basic and acidic residues) spans 251 to 260; the sequence is VEERPDSEAP.

This sequence belongs to the peptidase T1A family. The 20S proteasome core is composed of 14 alpha and 14 beta subunits that assemble into four stacked heptameric rings, resulting in a barrel-shaped structure. The two inner rings, each composed of seven catalytic beta subunits, are sandwiched by two outer rings, each composed of seven alpha subunits. The catalytic chamber with the active sites is on the inside of the barrel. Has a gated structure, the ends of the cylinder being occluded by the N-termini of the alpha-subunits. Is capped by the proteasome-associated ATPase, ARC.

It is found in the cytoplasm. Its pathway is protein degradation; proteasomal Pup-dependent pathway. The formation of the proteasomal ATPase ARC-20S proteasome complex, likely via the docking of the C-termini of ARC into the intersubunit pockets in the alpha-rings, may trigger opening of the gate for substrate entry. Interconversion between the open-gate and close-gate conformations leads to a dynamic regulation of the 20S proteasome proteolysis activity. Component of the proteasome core, a large protease complex with broad specificity involved in protein degradation. The chain is Proteasome subunit alpha from Salinispora tropica (strain ATCC BAA-916 / DSM 44818 / JCM 13857 / NBRC 105044 / CNB-440).